Consider the following 177-residue polypeptide: Large ribosomal subunit protein uL6 (177 aa).

The protein belongs to the universal ribosomal protein uL6 family. In terms of assembly, part of the 50S ribosomal subunit.

Its function is as follows. This protein binds to the 23S rRNA, and is important in its secondary structure. It is located near the subunit interface in the base of the L7/L12 stalk, and near the tRNA binding site of the peptidyltransferase center. This chain is Large ribosomal subunit protein uL6, found in Marinomonas sp. (strain MWYL1).